Consider the following 151-residue polypeptide: MAPRKGKEKKEEQVISLGPQVAEGENVFGVCHIFASFNDTFVHVTDLSGKETICRVTGGMKVKADRDESSPYAAMLAAQDVAQRCKELGITALHIKLRATGGNRTKTPGPGAQSALRALARSGMKIGRIEDVTPIPSDSTRRKGGRRGRRL.

Ser-16 is modified (phosphoserine). Glycyl lysine isopeptide (Lys-Gly) (interchain with G-Cter in SUMO2) cross-links involve residues Lys-61, Lys-63, and Lys-106. Positions 131–151 are disordered; that stretch reads DVTPIPSDSTRRKGGRRGRRL. Thr-133 is modified (phosphothreonine). Ser-139 is modified (phosphoserine). The span at 142–151 shows a compositional bias: basic residues; it reads RKGGRRGRRL.

It belongs to the universal ribosomal protein uS11 family. Component of the small ribosomal subunit. Part of the small subunit (SSU) processome, composed of more than 70 proteins and the RNA chaperone small nucleolar RNA (snoRNA) U3.

It is found in the cytoplasm. Its subcellular location is the nucleus. It localises to the nucleolus. Functionally, component of the small ribosomal subunit. The ribosome is a large ribonucleoprotein complex responsible for the synthesis of proteins in the cell. Part of the small subunit (SSU) processome, first precursor of the small eukaryotic ribosomal subunit. During the assembly of the SSU processome in the nucleolus, many ribosome biogenesis factors, an RNA chaperone and ribosomal proteins associate with the nascent pre-rRNA and work in concert to generate RNA folding, modifications, rearrangements and cleavage as well as targeted degradation of pre-ribosomal RNA by the RNA exosome. This Mus musculus (Mouse) protein is Small ribosomal subunit protein uS11 (Rps14).